The chain runs to 320 residues: Malate dehydrogenase (320 aa).

Residues 10 to 15 (GAGNIG) and aspartate 34 each bind NAD(+). Positions 83 and 89 each coordinate substrate. Residues asparagine 96 and 119 to 121 (ITN) contribute to the NAD(+) site. Substrate-binding residues include asparagine 121 and arginine 152. The Proton acceptor role is filled by histidine 176.

Belongs to the LDH/MDH superfamily. MDH type 3 family.

The enzyme catalyses (S)-malate + NAD(+) = oxaloacetate + NADH + H(+). Its function is as follows. Catalyzes the reversible oxidation of malate to oxaloacetate. This chain is Malate dehydrogenase, found in Sphingopyxis alaskensis (strain DSM 13593 / LMG 18877 / RB2256) (Sphingomonas alaskensis).